A 470-amino-acid polypeptide reads, in one-letter code: UDP-glycosyltransferase 91A1 (470 aa).

Residues Ser-290, 350 to 352, 367 to 375, and 389 to 392 each bind UDP-alpha-D-glucose; these read VEQ, HPGWGTIIE, and VYDQ.

It belongs to the UDP-glycosyltransferase family.

The chain is UDP-glycosyltransferase 91A1 (UGT91A1) from Arabidopsis thaliana (Mouse-ear cress).